The primary structure comprises 69 residues: Cold shock-like protein CspC (69 aa).

Residues 6–66 (GQVKWFNESK…GQKGPAAVNV (61 aa)) form the CSD domain.

The protein resides in the cytoplasm. The polypeptide is Cold shock-like protein CspC (cspC) (Shigella flexneri).